The sequence spans 1048 residues: MSHFLTFCFLSLLLLLHGANAVTETELRSLLEFRKGIRDETSHQRISWSDTSSLTDPSTCPNDWPGISCDPETGSIIAINLDRRGLSGELKFSTLSGLTRLRNLSLSGNSFSGRVVPSLGGISSLQHLDLSDNGFYGPIPGRISELWSLNHLNLSSNKFEGGFPSGFRNLQQLRSLDLHKNEIWGDVGEIFTELKNVEFVDLSCNRFNGGLSLPMENISSISNTLRHLNLSHNALNGKFFSEESIGSFKNLEIVDLENNQINGELPHFGSQPSLRILKLARNELFGLVPQELLQSSIPLLELDLSRNGFTGSISEINSSTLTMLNLSSNGLSGDLPSSFKSCSVIDLSGNTFSGDVSVVQKWEATPDVLDLSSNNLSGSLPNFTSAFSRLSVLSIRNNSVSGSLPSLWGDSQFSVIDLSSNKFSGFIPVSFFTFASLRSLNLSRNNLEGPIPFRGSRASELLVLNSYPQMELLDLSTNSLTGMLPGDIGTMEKIKVLNLANNKLSGELPSDLNKLSGLLFLDLSNNTFKGQIPNKLPSQMVGFNVSYNDLSGIIPEDLRSYPPSSFYPGNSKLSLPGRIPADSSGDLSLPGKKHHSKLSIRIAIIVASVGAAIMILFVLFAYHRTQLKDFHGRNRFTDQATTRDTKFGRSSRPSLFNFSSNVEQQSSSLSFSNDHLLTANSRSLSGIPGCEAEISEQGAPATSAPTNLLDDYPAASGRKSSSGGSPLSSSPRFSDQPVMLDVYSPDRLAGELFFLDVSLKLTAEELSRAPAEVLGRSSHGTLYKATLDNGHMLTVKWLRVGLVRHKKDFAREAKKIGSLKHPNIVPLRAYYWGPREQERLLLSDYLRGESLAMHLYETTPRRYSPMSFSQRLKVAVEVAQCLLYLHDRAMPHGNLKPTNIILSSPDNTVRITDYCVHRLMTPSGVAEQILNMSALGYSAPELSSASKPIPTLKSDVYAFGVILMELLTRRSAGDIISGQTGAVDLTDWVRLCDQEGRRMDCIDRDIAGGEEFSKGMEDALAVAIRCILSVNERPNIRQVLDHLTSISA.

Residues 1–21 (MSHFLTFCFLSLLLLLHGANA) form the signal peptide. LRR repeat units lie at residues 100 to 120 (RLRN…PSLG), 124 to 146 (SLQH…ISEL), 148 to 169 (SLNH…GFRN), 172 to 194 (QLRS…FTEL), 196 to 217 (NVEF…PMEN), 224 to 246 (TLRH…ESIG), 250 to 272 (NLEI…GSQP), 273 to 294 (SLRI…ELLQ), 298 to 319 (PLLE…INSS), 320 to 342 (TLTM…FKSC), 365 to 387 (TPDV…TSAF), 389 to 411 (RLSV…WGDS), 412 to 433 (QFSV…SFFT), 436 to 457 (SLRS…RGSR), 469 to 491 (QMEL…IGTM), 493 to 516 (KIKV…NKLS), 517 to 539 (GLLF…LPSQ), and 540 to 560 (MVGF…DLRS). The helical transmembrane segment at 602–622 (IAIIVASVGAAIMILFVLFAY) threads the bilayer. Positions 696 to 733 (EQGAPATSAPTNLLDDYPAASGRKSSSGGSPLSSSPRF) are disordered. Residues 716–733 (SGRKSSSGGSPLSSSPRF) show a composition bias toward low complexity. S744 carries the post-translational modification Phosphoserine. Residues 768–1045 (RAPAEVLGRS…IRQVLDHLTS (278 aa)) form the Protein kinase domain. ATP is bound by residues 774–782 (LGRSSHGTL) and K796.

The protein belongs to the protein kinase superfamily.

The protein resides in the membrane. This is Probable inactive receptor kinase At5g10020 from Arabidopsis thaliana (Mouse-ear cress).